Consider the following 483-residue polypeptide: Cysteine proteinase 1, mitochondrial (483 aa).

A mitochondrion-targeting transit peptide spans 1–30; that stretch reads MLPTSVSRSLYLKTFRSHLLRAPQIVLKRM. Active-site residues include cysteine 102, histidine 398, and asparagine 421. A propeptide (removed in mature form; by autocatalysis) is located at residue lysine 483.

Belongs to the peptidase C1 family. As to quaternary structure, homohexamer. Binds to nucleic acids. Binds single-stranded DNA and RNA with higher affinity than double-stranded DNA. The N-terminus of isoform Cytoplasmic is blocked.

The protein resides in the mitochondrion. The protein localises to the cytoplasm. The enzyme catalyses Inactivates bleomycin B2 (a cytotoxic glycometallopeptide) by hydrolysis of a carboxyamide bond of beta-aminoalanine, but also shows general aminopeptidase activity. The specificity varies somewhat with source, but amino acid arylamides of Met, Leu and Ala are preferred.. Inhibited by E64, a specific inhibitor of cysteine proteases, N-ethylmaleimide, iodacetamide, and mercury and zinc ions. In terms of biological role, the normal physiological role of the enzyme is unknown, but it is not essential for the viability of yeast cells. Has aminopeptidase activity, shortening substrate peptides sequentially by 1 amino acid. Has bleomycin hydrolase activity, which can protect the cell from the toxic effects of bleomycin. Has homocysteine-thiolactonase activity, protecting the cell against homocysteine toxicity. Acts as a repressor in the GAL4 regulatory system, but this does not require either the peptidase or nucleic acid-binding activities. The polypeptide is Cysteine proteinase 1, mitochondrial (LAP3) (Saccharomyces cerevisiae (strain AWRI1631) (Baker's yeast)).